The chain runs to 501 residues: Glutamate--tRNA ligase (501 aa).

A 'HIGH' region motif is present at residues 11–21 (PSPTGALHIGG). The 'KMSKS' region signature appears at 260–264 (KLSKR). K263 lines the ATP pocket.

This sequence belongs to the class-I aminoacyl-tRNA synthetase family. Glutamate--tRNA ligase type 1 subfamily. Monomer.

It is found in the cytoplasm. The enzyme catalyses tRNA(Glu) + L-glutamate + ATP = L-glutamyl-tRNA(Glu) + AMP + diphosphate. In terms of biological role, catalyzes the attachment of glutamate to tRNA(Glu) in a two-step reaction: glutamate is first activated by ATP to form Glu-AMP and then transferred to the acceptor end of tRNA(Glu). The protein is Glutamate--tRNA ligase of Flavobacterium psychrophilum (strain ATCC 49511 / DSM 21280 / CIP 103535 / JIP02/86).